Reading from the N-terminus, the 239-residue chain is Ribosomal RNA large subunit methyltransferase E (239 aa).

Residues Gly88, Trp90, Asp111, Asp127, and Asp151 each contribute to the S-adenosyl-L-methionine site. The Proton acceptor role is filled by Lys191.

This sequence belongs to the class I-like SAM-binding methyltransferase superfamily. RNA methyltransferase RlmE family.

Its subcellular location is the cytoplasm. The enzyme catalyses uridine(2552) in 23S rRNA + S-adenosyl-L-methionine = 2'-O-methyluridine(2552) in 23S rRNA + S-adenosyl-L-homocysteine + H(+). In terms of biological role, specifically methylates the uridine in position 2552 of 23S rRNA at the 2'-O position of the ribose in the fully assembled 50S ribosomal subunit. The sequence is that of Ribosomal RNA large subunit methyltransferase E from Bartonella bacilliformis (strain ATCC 35685 / KC583 / Herrer 020/F12,63).